Here is a 73-residue protein sequence, read N- to C-terminus: Translation initiation factor IF-1 (73 aa).

The 73-residue stretch at 1-73 folds into the S1-like domain; the sequence is MAKKDGVIEI…TRGRIVYRYK (73 aa).

Belongs to the IF-1 family. Component of the 30S ribosomal translation pre-initiation complex which assembles on the 30S ribosome in the order IF-2 and IF-3, IF-1 and N-formylmethionyl-tRNA(fMet); mRNA recruitment can occur at any time during PIC assembly.

The protein resides in the cytoplasm. Functionally, one of the essential components for the initiation of protein synthesis. Stabilizes the binding of IF-2 and IF-3 on the 30S subunit to which N-formylmethionyl-tRNA(fMet) subsequently binds. Helps modulate mRNA selection, yielding the 30S pre-initiation complex (PIC). Upon addition of the 50S ribosomal subunit IF-1, IF-2 and IF-3 are released leaving the mature 70S translation initiation complex. The chain is Translation initiation factor IF-1 from Arthrobacter sp. (strain FB24).